The sequence spans 319 residues: Putative peptide permease protein BRA0408/BS1330_II0405 (319 aa).

6 consecutive transmembrane segments (helical) span residues Leu-9 to Leu-29, Leu-102 to Ile-122, Leu-138 to Phe-158, Leu-182 to Met-202, Leu-242 to Ile-262, and Tyr-284 to Leu-304. The 208-residue stretch at Ile-98–Thr-305 folds into the ABC transmembrane type-1 domain.

It belongs to the binding-protein-dependent transport system permease family. The complex is composed of two ATP-binding proteins (BRA0404 and BRA0405), two transmembrane proteins (BRA0407 and BRA0408) and a solute-binding protein (BRA0409).

It is found in the cell inner membrane. Probably part of an ABC transporter complex that could be involved in peptide import. Probably responsible for the translocation of the substrate across the membrane. The polypeptide is Putative peptide permease protein BRA0408/BS1330_II0405 (Brucella suis biovar 1 (strain 1330)).